We begin with the raw amino-acid sequence, 305 residues long: tRNA dimethylallyltransferase (305 aa).

Glycine 14–threonine 21 is an ATP binding site. Threonine 16–threonine 21 contacts substrate. 3 interaction with substrate tRNA regions span residues aspartate 39–leucine 42, glutamine 163–arginine 167, and arginine 243–arginine 248.

It belongs to the IPP transferase family. In terms of assembly, monomer. Mg(2+) is required as a cofactor.

The catalysed reaction is adenosine(37) in tRNA + dimethylallyl diphosphate = N(6)-dimethylallyladenosine(37) in tRNA + diphosphate. Functionally, catalyzes the transfer of a dimethylallyl group onto the adenine at position 37 in tRNAs that read codons beginning with uridine, leading to the formation of N6-(dimethylallyl)adenosine (i(6)A). The chain is tRNA dimethylallyltransferase from Vesicomyosocius okutanii subsp. Calyptogena okutanii (strain HA).